The chain runs to 109 residues: Cell division protein ZapA (109 aa).

Positions 21-100 form a coiled coil; that stretch reads PDQRDALNQA…EQALLERGRI (80 aa).

It belongs to the ZapA family. Type 1 subfamily. Homodimer. Interacts with FtsZ.

The protein resides in the cytoplasm. Its function is as follows. Activator of cell division through the inhibition of FtsZ GTPase activity, therefore promoting FtsZ assembly into bundles of protofilaments necessary for the formation of the division Z ring. It is recruited early at mid-cell but it is not essential for cell division. This chain is Cell division protein ZapA, found in Shigella dysenteriae serotype 1 (strain Sd197).